Reading from the N-terminus, the 495-residue chain is Glutamyl-tRNA(Gln) amidotransferase subunit A (495 aa).

Catalysis depends on charge relay system residues Lys-75 and Ser-150. Catalysis depends on Ser-174, which acts as the Acyl-ester intermediate.

Belongs to the amidase family. GatA subfamily. In terms of assembly, heterotrimer of A, B and C subunits.

The catalysed reaction is L-glutamyl-tRNA(Gln) + L-glutamine + ATP + H2O = L-glutaminyl-tRNA(Gln) + L-glutamate + ADP + phosphate + H(+). Its function is as follows. Allows the formation of correctly charged Gln-tRNA(Gln) through the transamidation of misacylated Glu-tRNA(Gln) in organisms which lack glutaminyl-tRNA synthetase. The reaction takes place in the presence of glutamine and ATP through an activated gamma-phospho-Glu-tRNA(Gln). This Paraburkholderia xenovorans (strain LB400) protein is Glutamyl-tRNA(Gln) amidotransferase subunit A.